Here is a 296-residue protein sequence, read N- to C-terminus: 4-hydroxybenzoate octaprenyltransferase (296 aa).

The next 8 helical transmembrane spans lie at 28 to 48 (IGTL…SDGI), 51 to 71 (LAVL…GCVI), 102 to 122 (LLLT…LNHL), 143 to 163 (FFPI…PMAF), 174 to 194 (AWIL…VYAM), 212 to 232 (FGRY…LLMA), 233 to 253 (VLGA…IVLL), and 274 to 294 (FLAN…HTFF).

It belongs to the UbiA prenyltransferase family. Mg(2+) is required as a cofactor.

It localises to the cell inner membrane. The enzyme catalyses all-trans-octaprenyl diphosphate + 4-hydroxybenzoate = 4-hydroxy-3-(all-trans-octaprenyl)benzoate + diphosphate. It functions in the pathway cofactor biosynthesis; ubiquinone biosynthesis. Catalyzes the prenylation of para-hydroxybenzoate (PHB) with an all-trans polyprenyl group. Mediates the second step in the final reaction sequence of ubiquinone-8 (UQ-8) biosynthesis, which is the condensation of the polyisoprenoid side chain with PHB, generating the first membrane-bound Q intermediate 3-octaprenyl-4-hydroxybenzoate. The chain is 4-hydroxybenzoate octaprenyltransferase from Neisseria gonorrhoeae (strain ATCC 700825 / FA 1090).